Consider the following 621-residue polypeptide: uncharacterized protein (621 aa).

Belongs to the chlamydial CPn_0512/CT_425/TC_0708 family.

This is an uncharacterized protein from Chlamydia muridarum (strain MoPn / Nigg).